The sequence spans 729 residues: 1,4-alpha-glucan branching enzyme GlgB 2 (729 aa).

The Nucleophile role is filled by aspartate 408. The active-site Proton donor is glutamate 461.

It belongs to the glycosyl hydrolase 13 family. GlgB subfamily. As to quaternary structure, monomer.

It carries out the reaction Transfers a segment of a (1-&gt;4)-alpha-D-glucan chain to a primary hydroxy group in a similar glucan chain.. It functions in the pathway glycan biosynthesis; glycogen biosynthesis. Its function is as follows. Catalyzes the formation of the alpha-1,6-glucosidic linkages in glycogen by scission of a 1,4-alpha-linked oligosaccharide from growing alpha-1,4-glucan chains and the subsequent attachment of the oligosaccharide to the alpha-1,6 position. The protein is 1,4-alpha-glucan branching enzyme GlgB 2 of Xanthomonas campestris pv. campestris (strain 8004).